The sequence spans 86 residues: Kappa-theraphotoxin-Cg1c (86 aa).

The N-terminal stretch at 1–21 is a signal peptide; that stretch reads MKVSVLITLAVLGVMFVWASA. Residues 22–50 constitute a propeptide that is removed on maturation; that stretch reads AELEERGSDHRDSPAWLKSMERIFQSEER. 3 cysteine pairs are disulfide-bonded: Cys-52/Cys-66, Cys-59/Cys-71, and Cys-65/Cys-78.

The protein belongs to the neurotoxin 10 (Hwtx-1) family. 28 (Jztx-11) subfamily. In terms of tissue distribution, expressed by the venom gland.

The protein resides in the secreted. In terms of biological role, probable ion channel inhibitor. The sequence is that of Kappa-theraphotoxin-Cg1c from Chilobrachys guangxiensis (Chinese earth tiger tarantula).